Consider the following 361-residue polypeptide: Phosphoserine aminotransferase (361 aa).

Arginine 42 lines the L-glutamate pocket. Residues 76 to 77 (AT), tryptophan 102, threonine 152, aspartate 172, and glutamine 195 contribute to the pyridoxal 5'-phosphate site. Lysine 196 bears the N6-(pyridoxal phosphate)lysine mark. 237-238 (NT) contacts pyridoxal 5'-phosphate.

It belongs to the class-V pyridoxal-phosphate-dependent aminotransferase family. SerC subfamily. As to quaternary structure, homodimer. Pyridoxal 5'-phosphate serves as cofactor.

It is found in the cytoplasm. It carries out the reaction O-phospho-L-serine + 2-oxoglutarate = 3-phosphooxypyruvate + L-glutamate. The catalysed reaction is 4-(phosphooxy)-L-threonine + 2-oxoglutarate = (R)-3-hydroxy-2-oxo-4-phosphooxybutanoate + L-glutamate. The protein operates within amino-acid biosynthesis; L-serine biosynthesis; L-serine from 3-phospho-D-glycerate: step 2/3. Its pathway is cofactor biosynthesis; pyridoxine 5'-phosphate biosynthesis; pyridoxine 5'-phosphate from D-erythrose 4-phosphate: step 3/5. Its function is as follows. Catalyzes the reversible conversion of 3-phosphohydroxypyruvate to phosphoserine and of 3-hydroxy-2-oxo-4-phosphonooxybutanoate to phosphohydroxythreonine. This is Phosphoserine aminotransferase from Xanthomonas oryzae pv. oryzae (strain MAFF 311018).